The primary structure comprises 314 residues: GTPase Era (314 aa).

An Era-type G domain is found at 7-188; it reads RCGFAAVIGS…REFIAGLMPE (182 aa). The G1 stretch occupies residues 15 to 22; sequence GSPNAGKS. 15–22 is a GTP binding site; the sequence is GSPNAGKS. Residues 41–45 are G2; sequence QTTRF. A G3 region spans residues 62-65; it reads DTPG. Residues 62–66 and 138–141 each bind GTP; these read DTPGV and NKVD. Positions 138-141 are G4; that stretch reads NKVD. The segment at 167–169 is G5; the sequence is ISA. The KH type-2 domain maps to 219–296; it reads LHEELPYASM…HLFLNVKVDA (78 aa).

This sequence belongs to the TRAFAC class TrmE-Era-EngA-EngB-Septin-like GTPase superfamily. Era GTPase family. As to quaternary structure, monomer.

It localises to the cytoplasm. The protein localises to the cell inner membrane. In terms of biological role, an essential GTPase that binds both GDP and GTP, with rapid nucleotide exchange. Plays a role in 16S rRNA processing and 30S ribosomal subunit biogenesis and possibly also in cell cycle regulation and energy metabolism. The protein is GTPase Era of Maricaulis maris (strain MCS10) (Caulobacter maris).